A 375-amino-acid chain; its full sequence is 4,4'-diaponeurosporenoate glycosyltransferase (375 aa).

Helical transmembrane passes span 3-23 (WLSR…ALIF), 164-184 (FYEG…NVFS), 277-297 (IMTA…GLCL), and 330-350 (FSNL…KIFI).

Belongs to the glycosyltransferase 2 family. CrtQ subfamily.

It localises to the cell membrane. It functions in the pathway carotenoid biosynthesis; staphyloxanthin biosynthesis; staphyloxanthin from farnesyl diphosphate: step 4/5. In terms of biological role, catalyzes the glycosylation of 4,4'-diaponeurosporenoate, i.e. the esterification of glucose at the C1'' position with the carboxyl group of 4,4'-diaponeurosporenic acid, to form glycosyl-4,4'-diaponeurosporenoate. This is a step in the biosynthesis of staphyloxanthin, an orange pigment present in most staphylococci strains. The protein is 4,4'-diaponeurosporenoate glycosyltransferase (crtQ) of Staphylococcus aureus (strain USA300).